We begin with the raw amino-acid sequence, 144 residues long: 3-dehydroquinate dehydratase (144 aa).

Tyr-22 functions as the Proton acceptor in the catalytic mechanism. Asn-73, His-79, and Asp-86 together coordinate substrate. The active-site Proton donor is His-99. Substrate-binding positions include 100–101 and Arg-110; that span reads LS.

It belongs to the type-II 3-dehydroquinase family. Homododecamer.

The catalysed reaction is 3-dehydroquinate = 3-dehydroshikimate + H2O. Its pathway is metabolic intermediate biosynthesis; chorismate biosynthesis; chorismate from D-erythrose 4-phosphate and phosphoenolpyruvate: step 3/7. Functionally, catalyzes a trans-dehydration via an enolate intermediate. The chain is 3-dehydroquinate dehydratase from Pelotomaculum thermopropionicum (strain DSM 13744 / JCM 10971 / SI).